A 553-amino-acid chain; its full sequence is Arginine--tRNA ligase (553 aa).

A 'HIGH' region motif is present at residues 130-140 (ANPTGPVHLGG).

The protein belongs to the class-I aminoacyl-tRNA synthetase family. As to quaternary structure, monomer.

The protein localises to the cytoplasm. The enzyme catalyses tRNA(Arg) + L-arginine + ATP = L-arginyl-tRNA(Arg) + AMP + diphosphate. The chain is Arginine--tRNA ligase from Saccharopolyspora erythraea (strain ATCC 11635 / DSM 40517 / JCM 4748 / NBRC 13426 / NCIMB 8594 / NRRL 2338).